A 223-amino-acid chain; its full sequence is Proteasome subunit beta type-1 (223 aa).

This sequence belongs to the peptidase T1B family. In terms of assembly, the 26S proteasome consists of a 20S proteasome core and two 19S regulatory subunits. The 20S proteasome core is composed of 28 subunits that are arranged in four stacked rings, resulting in a barrel-shaped structure. The two end rings are each formed by seven alpha subunits, and the two central rings are each formed by seven beta subunits. The catalytic chamber with the active sites is on the inside of the barrel.

It localises to the cytoplasm. The protein localises to the nucleus. Functionally, non-catalytic component of the proteasome, a multicatalytic proteinase complex which is characterized by its ability to cleave peptides with Arg, Phe, Tyr, Leu, and Glu adjacent to the leaving group at neutral or slightly basic pH. The proteasome has an ATP-dependent proteolytic activity. The protein is Proteasome subunit beta type-1 (PBF1) of Petunia hybrida (Petunia).